Reading from the N-terminus, the 108-residue chain is Nucleoid-associated protein HCH_02614 (108 aa).

It belongs to the YbaB/EbfC family. In terms of assembly, homodimer.

It localises to the cytoplasm. The protein localises to the nucleoid. Functionally, binds to DNA and alters its conformation. May be involved in regulation of gene expression, nucleoid organization and DNA protection. This is Nucleoid-associated protein HCH_02614 from Hahella chejuensis (strain KCTC 2396).